We begin with the raw amino-acid sequence, 1132 residues long: Eisosome protein SEG2 (1132 aa).

Positions 76 to 95 are enriched in polar residues; the sequence is KRTSSLPNQGHKNTSNNSAG. Disordered stretches follow at residues 76–142 and 171–225; these read KRTS…GNSG and RYSL…NDYH. The segment covering 101–113 has biased composition (basic and acidic residues); it reads AHEDAETTFREFG. The segment covering 115–142 has biased composition (polar residues); that stretch reads KQSSKVLNISSSTGQNSKSRTTSLGNSG. Phosphoserine is present on S137. The segment covering 208–225 has biased composition (basic and acidic residues); that stretch reads GSQEKKSESGGKSKNDYH. A Phosphoserine modification is found at S280. The disordered stretch occupies residues 404–429; that stretch reads PTLSEPKPAYVPPEDVEKEPSTLSNQ. S504 and S507 each carry phosphoserine. Disordered regions lie at residues 510–938 and 961–993; these read GGNQ…FRSM and EKKE…THTT. Residue K526 forms a Glycyl lysine isopeptide (Lys-Gly) (interchain with G-Cter in ubiquitin) linkage. Acidic residues-rich tracts occupy residues 550 to 561 and 595 to 644; these read DQEEALSDNEPE and KDDD…DDEY. At S556 the chain carries Phosphoserine. Polar residues-rich tracts occupy residues 688 to 699 and 710 to 735; these read SENAEVSQSGTN and YLTN…TDTT. A Glycyl lysine isopeptide (Lys-Gly) (interchain with G-Cter in ubiquitin) cross-link involves residue K743. The span at 761 to 773 shows a compositional bias: low complexity; it reads SSTSSSIYSIETS. Polar residues-rich tracts occupy residues 774-810 and 827-845; these read PNID…SSHQ and NRSC…TLSH. Positions 850 to 860 are enriched in low complexity; the sequence is PASDSSSSPPY. Over residues 916-930 the composition is skewed to basic and acidic residues; the sequence is PPARKSSFEKERPAK. S980 and S1022 each carry phosphoserine.

Belongs to the SEG1 family. In terms of assembly, component of eisosomes, large cytoplasmic protein assemblies that localize to specialized domains termed MCCs on the plasma membrane.

It is found in the cell membrane. Likely plays only a minor role in eisosome assembly. In Saccharomyces cerevisiae (strain ATCC 204508 / S288c) (Baker's yeast), this protein is Eisosome protein SEG2 (SEG2).